Reading from the N-terminus, the 37-residue chain is Large ribosomal subunit protein bL36c (37 aa).

The protein belongs to the bacterial ribosomal protein bL36 family.

The protein localises to the plastid. The protein resides in the chloroplast. This is Large ribosomal subunit protein bL36c from Lotus japonicus (Lotus corniculatus var. japonicus).